A 212-amino-acid polypeptide reads, in one-letter code: Guanylate kinase (212 aa).

Residues 14–192 enclose the Guanylate kinase-like domain; that stretch reads GTALVICAPS…AYDELRATYL (179 aa). 21–28 contributes to the ATP binding site; it reads APSGTGKT.

The protein belongs to the guanylate kinase family.

The protein localises to the cytoplasm. The enzyme catalyses GMP + ATP = GDP + ADP. In terms of biological role, essential for recycling GMP and indirectly, cGMP. This is Guanylate kinase from Lawsonia intracellularis (strain PHE/MN1-00).